The chain runs to 202 residues: Large ribosomal subunit protein bL25 (202 aa).

Belongs to the bacterial ribosomal protein bL25 family. CTC subfamily. Part of the 50S ribosomal subunit; part of the 5S rRNA/L5/L18/L25 subcomplex. Contacts the 5S rRNA. Binds to the 5S rRNA independently of L5 and L18.

Functionally, this is one of the proteins that binds to the 5S RNA in the ribosome where it forms part of the central protuberance. The polypeptide is Large ribosomal subunit protein bL25 (Paramagnetospirillum magneticum (strain ATCC 700264 / AMB-1) (Magnetospirillum magneticum)).